Here is a 57-residue protein sequence, read N- to C-terminus: COP9 signalosome complex subunit 9 (57 aa).

Thr26 carries the phosphothreonine modification.

The protein belongs to the CSN9 family. In terms of assembly, component of the CSN complex, composed of COPS1/GPS1, COPS2, COPS3, COPS4, COPS5, COPS6, COPS7 (COPS7A or COPS7B), COPS8 and COPS9. In the complex, it interacts directly with COPS3, COPS5 and COPS6.

It is found in the nucleus. It localises to the cytoplasm. The protein resides in the nucleoplasm. Component of the COP9 signalosome complex (CSN), a complex involved in various cellular and developmental processes. The CSN complex is an essential regulator of the ubiquitin (Ubl) conjugation pathway by mediating the deneddylation of the cullin subunits of SCF-type E3 ligase complexes, leading to decrease the Ubl ligase activity of SCF-type complexes such as SCF, CSA or DDB2. The complex is also involved in phosphorylation of p53/TP53, c-jun/JUN, IkappaBalpha/NFKBIA, ITPK1 and IRF8/ICSBP, possibly via its association with CK2 and PKD kinases. CSN-dependent phosphorylation of TP53 and JUN promotes and protects degradation by the Ubl system, respectively. Plays a role in cell proliferation. This is COP9 signalosome complex subunit 9 from Mus musculus (Mouse).